Reading from the N-terminus, the 278-residue chain is 4-hydroxy-tetrahydrodipicolinate reductase (278 aa).

NAD(+) contacts are provided by residues 13–18 (GAAGKM) and 111–113 (GTT). His-167 functions as the Proton donor/acceptor in the catalytic mechanism. Residue His-168 participates in (S)-2,3,4,5-tetrahydrodipicolinate binding. Lys-171 serves as the catalytic Proton donor. 177 to 178 (GT) is a (S)-2,3,4,5-tetrahydrodipicolinate binding site.

The protein belongs to the DapB family.

The protein localises to the cytoplasm. The catalysed reaction is (S)-2,3,4,5-tetrahydrodipicolinate + NAD(+) + H2O = (2S,4S)-4-hydroxy-2,3,4,5-tetrahydrodipicolinate + NADH + H(+). It catalyses the reaction (S)-2,3,4,5-tetrahydrodipicolinate + NADP(+) + H2O = (2S,4S)-4-hydroxy-2,3,4,5-tetrahydrodipicolinate + NADPH + H(+). Its pathway is amino-acid biosynthesis; L-lysine biosynthesis via DAP pathway; (S)-tetrahydrodipicolinate from L-aspartate: step 4/4. In terms of biological role, catalyzes the conversion of 4-hydroxy-tetrahydrodipicolinate (HTPA) to tetrahydrodipicolinate. The chain is 4-hydroxy-tetrahydrodipicolinate reductase from Nostoc sp. (strain PCC 7120 / SAG 25.82 / UTEX 2576).